The chain runs to 85 residues: UPF0297 protein LBA0418 (85 aa).

This sequence belongs to the UPF0297 family.

In Lactobacillus acidophilus (strain ATCC 700396 / NCK56 / N2 / NCFM), this protein is UPF0297 protein LBA0418.